The following is a 349-amino-acid chain: Lachesin (349 aa).

Positions 1–18 (MDLRLYTIFVGFFSVVYA) are cleaved as a signal peptide. In terms of domain architecture, Ig-like V-type spans 22–127 (PTISYISQEQ…NKITAEVDLQ (106 aa)). Cysteine 43 and cysteine 110 form a disulfide bridge. 2 consecutive Ig-like C2-type domains span residues 132 to 218 (PVIS…IAVE) and 222 to 315 (PPVI…VELF). N-linked (GlcNAc...) asparagine glycosylation occurs at asparagine 137. Disulfide bonds link cysteine 154–cysteine 201 and cysteine 244–cysteine 299. Glycine 332 carries GPI-anchor amidated glycine lipidation. A propeptide spans 333–349 (DAAEISTSMALILISTI) (removed in mature form).

In terms of processing, the N-terminus is blocked. In terms of tissue distribution, expressed by all neurogenic cells early, but only those cells that become neuroblasts continue to express it. Expressed by neuroblasts, ganglion mother cells and neurons early in their lives, but expression becomes restricted to a subset of neurons as development progresses. Expressed by sensory neurons as they delaminate from the body wall ectoderm. It is also present on growing axons of the CNS and PNS and becomes restricted to a subset of axons later in development.

It is found in the cell membrane. Its function is as follows. May play a role in early neuronal differentiation and axon outgrowth. The sequence is that of Lachesin (LAC) from Schistocerca americana (American grasshopper).